Consider the following 253-residue polypeptide: DNA repair protein RecO (253 aa).

Belongs to the RecO family.

Involved in DNA repair and RecF pathway recombination. This Dehalococcoides mccartyi (strain ATCC BAA-2266 / KCTC 15142 / 195) (Dehalococcoides ethenogenes (strain 195)) protein is DNA repair protein RecO.